We begin with the raw amino-acid sequence, 356 residues long: Trans-enoyl reductase pgmF (356 aa).

NADP(+)-binding positions include 57-60 (VDFK), 175-178 (SGGC), 198-201 (STPN), Y216, 261-262 (VG), and 342-343 (AK).

This sequence belongs to the zinc-containing alcohol dehydrogenase family.

Its function is as follows. FAD-linked oxidoreductase; part of the gene cluster that mediates the biosynthesis of pleosporalin A, ascomycone A, as well as a third cryptic naphthoquinone derived pigment, all responsible for the coloration of conidia. The pathway begins with the biosynthesis of the cyclized heptaketide 3-acetonyl-1,6,8-trihydroxy-2-naphthaldehyde by the NR-PKS pgmA. The C-6 hydroxyl group is further methylated by the O-methyltransferase pgmB to yield fusarubinaldehyde which is in turn oxidized by the cytochrome P450 monooxygenase pgmC at C-9. The C-1 hydroxyl group is then methylated spontaneously. Although pgmE, pgmD and pgmH are essential for the production of pleosporalin A, it is not the case for the 2 other final products and it remains difficult to assign a specific function to each enzyme. PgmF and pgmG seem not to be involved in pigment biosynthesis although they were regulated by the cluster-specific transcription factor pgmR. In Aspergillus terreus (strain NIH 2624 / FGSC A1156), this protein is Trans-enoyl reductase pgmF.